The sequence spans 100 residues: Large ribosomal subunit protein uL23 (100 aa).

The protein belongs to the universal ribosomal protein uL23 family. Part of the 50S ribosomal subunit. Contacts protein L29, and trigger factor when it is bound to the ribosome.

Functionally, one of the early assembly proteins it binds 23S rRNA. One of the proteins that surrounds the polypeptide exit tunnel on the outside of the ribosome. Forms the main docking site for trigger factor binding to the ribosome. This Shewanella piezotolerans (strain WP3 / JCM 13877) protein is Large ribosomal subunit protein uL23.